Reading from the N-terminus, the 512-residue chain is MLFRISMSATEFLLASLIFCLVFWVIRASRPRVPKGLKNPPGPWGWPLIGHILTLGKNPHLALSRMSQRYGDVLQIRIGSTPVLVLSGLDTIRQALVQQGDDFKGRPNLYSFTLISNGQSMSFGPDSGPVWAARRRLAQNGLKSFSIASDPASSSSCYLEEHVSKEAEVLISKLQEQMAGPGHFNPYRYVVISVANVICAICFGQRYDHNHQELLSLVNLSNNFGEVVGSGNPADFIPILRYLPNRSLNGFKDLNEKFHSFMQKMIKEHYKTFEKGHIRDITDSLIEHCQEKQLDENANIQLSDEKIVNVVLDLFGAGFDTVTTAISWSLMYLVTNPRVQRKIQEELDTVIGRSRRPRLSDRSHLPYMEAFILETFRHSSFVPFTIPHSTTRDTSLKGFYIPKGRCVFVNQWQINHDQKLWVNPSEFLPERFITPDGAIDKVLSEKVILFGLGKRKCIGETIARWEVFLFLAILLQRVEFSVPPGVKVDMTPIYGLTMKHACCEHFQMQLRS.

The interval serine 29 to proline 40 is mitochondrial targeting signal. Residue serine 67 is glycosylated (O-linked (GlcNAc) serine). Phenylalanine 224 provides a ligand contact to substrate. Cysteine 457 is a heme binding site.

This sequence belongs to the cytochrome P450 family. In terms of assembly, interacts with cytosolic chaperones HSP70 and HSP90; this interaction is required for initial targeting to mitochondria. Interacts (via mitochondrial targeting signal) with TOMM40 (via N-terminus); this interaction is required for translocation across the mitochondrial outer membrane. Heme is required as a cofactor.

Its subcellular location is the endoplasmic reticulum membrane. It localises to the mitochondrion inner membrane. It is found in the microsome membrane. The protein localises to the cytoplasm. The catalysed reaction is an organic molecule + reduced [NADPH--hemoprotein reductase] + O2 = an alcohol + oxidized [NADPH--hemoprotein reductase] + H2O + H(+). The enzyme catalyses estrone + reduced [NADPH--hemoprotein reductase] + O2 = 2-hydroxyestrone + oxidized [NADPH--hemoprotein reductase] + H2O + H(+). It carries out the reaction estrone + reduced [NADPH--hemoprotein reductase] + O2 = 4-hydroxyestrone + oxidized [NADPH--hemoprotein reductase] + H2O + H(+). It catalyses the reaction estrone + reduced [NADPH--hemoprotein reductase] + O2 = 6alpha-hydroxyestrone + oxidized [NADPH--hemoprotein reductase] + H2O + H(+). The catalysed reaction is estrone + reduced [NADPH--hemoprotein reductase] + O2 = 15alpha-hydroxyestrone + oxidized [NADPH--hemoprotein reductase] + H2O + H(+). The enzyme catalyses estrone + reduced [NADPH--hemoprotein reductase] + O2 = 16alpha-hydroxyestrone + oxidized [NADPH--hemoprotein reductase] + H2O + H(+). It carries out the reaction 17beta-estradiol + reduced [NADPH--hemoprotein reductase] + O2 = 2-hydroxy-17beta-estradiol + oxidized [NADPH--hemoprotein reductase] + H2O + H(+). It catalyses the reaction 17beta-estradiol + reduced [NADPH--hemoprotein reductase] + O2 = 4-hydroxy-17beta-estradiol + oxidized [NADPH--hemoprotein reductase] + H2O + H(+). The catalysed reaction is 17beta-estradiol + reduced [NADPH--hemoprotein reductase] + O2 = 6alpha-hydroxy-17beta-estradiol + oxidized [NADPH--hemoprotein reductase] + H2O + H(+). The enzyme catalyses 17beta-estradiol + reduced [NADPH--hemoprotein reductase] + O2 = 7alpha-hydroxy-17beta-estradiol + oxidized [NADPH--hemoprotein reductase] + H2O + H(+). It carries out the reaction 17beta-estradiol + reduced [NADPH--hemoprotein reductase] + O2 = 15alpha-hydroxy-17beta-estradiol + oxidized [NADPH--hemoprotein reductase] + H2O + H(+). It catalyses the reaction (5Z,8Z,11Z)-eicosatrienoate + reduced [NADPH--hemoprotein reductase] + O2 = 19-hydroxy-(5Z,8Z,11Z)-eicosatrienoate + oxidized [NADPH--hemoprotein reductase] + H2O + H(+). The catalysed reaction is (5Z,8Z,11Z,14Z)-eicosatetraenoate + reduced [NADPH--hemoprotein reductase] + O2 = 16-hydroxy-(5Z,8Z,11Z,14Z)-eicosatetraenoate + oxidized [NADPH--hemoprotein reductase] + H2O + H(+). The enzyme catalyses (5Z,8Z,11Z,14Z)-eicosatetraenoate + reduced [NADPH--hemoprotein reductase] + O2 = 17-hydroxy-(5Z,8Z,11Z,14Z)-eicosatetraenoate + oxidized [NADPH--hemoprotein reductase] + H2O + H(+). It carries out the reaction (5Z,8Z,11Z,14Z)-eicosatetraenoate + reduced [NADPH--hemoprotein reductase] + O2 = 18-hydroxy-(5Z,8Z,11Z,14Z)-eicosatetraenoate + oxidized [NADPH--hemoprotein reductase] + H2O + H(+). It catalyses the reaction (5Z,8Z,11Z,14Z)-eicosatetraenoate + reduced [NADPH--hemoprotein reductase] + O2 = 19-hydroxy-(5Z,8Z,11Z,14Z)-eicosatetraenoate + oxidized [NADPH--hemoprotein reductase] + H2O + H(+). The catalysed reaction is (5Z,8Z,11Z,14Z,17Z)-eicosapentaenoate + reduced [NADPH--hemoprotein reductase] + O2 = 19-hydroxy-(5Z,8Z,11Z,14Z,17Z)-eicosapentaenoate + oxidized [NADPH--hemoprotein reductase] + H2O + H(+). The enzyme catalyses (5Z,8Z,11Z,14Z)-eicosatetraenoate + reduced [NADPH--hemoprotein reductase] + O2 = (8R,9S)-epoxy-(5Z,11Z,14Z)-eicosatrienoate + oxidized [NADPH--hemoprotein reductase] + H2O + H(+). It carries out the reaction (5Z,8Z,11Z,14Z)-eicosatetraenoate + reduced [NADPH--hemoprotein reductase] + O2 = (11R,12S)-epoxy-(5Z,8Z,14Z)-eicosatrienoate + oxidized [NADPH--hemoprotein reductase] + H2O + H(+). It catalyses the reaction (5Z,8Z,11Z,14Z)-eicosatetraenoate + reduced [NADPH--hemoprotein reductase] + O2 = (14S,15R)-epoxy-(5Z,8Z,11Z)-eicosatrienoate + oxidized [NADPH--hemoprotein reductase] + H2O + H(+). The catalysed reaction is (5Z,8Z,11Z,14Z)-eicosatetraenoate + reduced [NADPH--hemoprotein reductase] + O2 = (14R,15S)-epoxy-(5Z,8Z,11Z)-eicosatrienoate + oxidized [NADPH--hemoprotein reductase] + H2O + H(+). The enzyme catalyses (5Z,8Z,11Z,14Z,17Z)-eicosapentaenoate + reduced [NADPH--hemoprotein reductase] + O2 = (17R,18S)-epoxy-(5Z,8Z,11Z,14Z)-eicosatetraenoate + oxidized [NADPH--hemoprotein reductase] + H2O + H(+). It carries out the reaction (4Z,7Z,10Z,13Z,16Z,19Z)-docosahexaenoate + reduced [NADPH--hemoprotein reductase] + O2 = (19S,20R)-epoxy-(4Z,7Z,10Z,13Z,16Z)-docosapentaenoate + oxidized [NADPH--hemoprotein reductase] + H2O + H(+). It catalyses the reaction (4Z,7Z,10Z,13Z,16Z,19Z)-docosahexaenoate + reduced [NADPH--hemoprotein reductase] + O2 = (19R,20S)-epoxy-(4Z,7Z,10Z,13Z,16Z)-docosapentaenoate + oxidized [NADPH--hemoprotein reductase] + H2O + H(+). The catalysed reaction is all-trans-retinol + reduced [NADPH--hemoprotein reductase] + O2 = all-trans-retinal + oxidized [NADPH--hemoprotein reductase] + 2 H2O + H(+). The enzyme catalyses all-trans-retinal + reduced [NADPH--hemoprotein reductase] + O2 = all-trans-retinoate + oxidized [NADPH--hemoprotein reductase] + H2O + 2 H(+). It carries out the reaction (13S)-hydroperoxy-(9Z,11E)-octadecadienoate = 13-oxo-(9Z,11E)-octadecadienoate + H2O. It catalyses the reaction (12S)-hydroperoxy-(5Z,8Z,10E,14Z)-eicosatetraenoate = 12-oxo-(5Z,8Z,10E,14Z)-eicosatetraenoate + H2O. The catalysed reaction is (15S)-hydroperoxy-(5Z,8Z,11Z,13E)-eicosatetraenoate = 15-oxo-(5Z,8Z,11Z,13E)-eicosatetraenoate + H2O. The enzyme catalyses (5S)-hydroperoxy-(6E,8Z,11Z,14Z)-eicosatetraenoate = 5-oxo-(6E,8Z,11Z,14Z)-eicosatetraenoate + H2O. It functions in the pathway steroid hormone biosynthesis. Its pathway is lipid metabolism; fatty acid metabolism. The protein operates within cofactor metabolism; retinol metabolism. A cytochrome P450 monooxygenase involved in the metabolism of various endogenous substrates, including fatty acids, steroid hormones and vitamins. Mechanistically, uses molecular oxygen inserting one oxygen atom into a substrate, and reducing the second into a water molecule, with two electrons provided by NADPH via cytochrome P450 reductase (CPR; NADPH-ferrihemoprotein reductase). Catalyzes the hydroxylation of carbon-hydrogen bonds. Exhibits high catalytic activity for the formation of hydroxyestrogens from estrone (E1) and 17beta-estradiol (E2), namely 2-hydroxy E1 and E2, as well as D-ring hydroxylated E1 and E2 at the C15alpha and C16alpha positions. Displays different regioselectivities for polyunsaturated fatty acids (PUFA) hydroxylation. Catalyzes the epoxidation of double bonds of certain PUFA. Converts arachidonic acid toward epoxyeicosatrienoic acid (EET) regioisomers, 8,9-, 11,12-, and 14,15-EET, that function as lipid mediators in the vascular system. Displays an absolute stereoselectivity in the epoxidation of eicosapentaenoic acid (EPA) producing the 17(R),18(S) enantiomer. May play an important role in all-trans retinoic acid biosynthesis in extrahepatic tissues. Catalyzes two successive oxidative transformation of all-trans retinol to all-trans retinal and then to the active form all-trans retinoic acid. May also participate in eicosanoids metabolism by converting hydroperoxide species into oxo metabolites (lipoxygenase-like reaction, NADPH-independent). This is Cytochrome P450 1A1 (CYP1A1) from Macaca mulatta (Rhesus macaque).